The following is a 1348-amino-acid chain: ABC multidrug transporter atrD (1348 aa).

Over residues 1–10 the composition is skewed to polar residues; the sequence is MSPLETNPLS. The segment at 1-67 is disordered; that stretch reads MSPLETNPLS…HRPKSSSSNN (67 aa). Residues 20 to 31 show a composition bias toward low complexity; it reads ETSTTEEQASTP. Asparagine 99 carries N-linked (GlcNAc...) asparagine glycosylation. 4 helical membrane passes run 114–134, 168–188, 240–260, and 268–288; these read ILIMVISTICAIAAGAALPLF, YFVYLGIGEFVTVYVSTVGFI, KVGLTLTALATFVTAFIIAYV, and ICSSTIVALVLTMGGGSQFII. The 291-residue stretch at 118-408 folds into the ABC transmembrane type-1 1 domain; it reads VISTICAIAA…VSPNAQAFTN (291 aa). A glycan (N-linked (GlcNAc...) asparagine) is linked at asparagine 314. The next 2 membrane-spanning stretches (helical) occupy residues 344 to 364 and 371 to 391; these read IVMGFMIGAMFGLMYSNYGLG and FLVDGAVDVGDILTVLMAILI. The ABC transporter 1 domain occupies 443–688; it reads IELRNVKHIY…GGAYRKLVEA (246 aa). 478 to 485 is a binding site for ATP; the sequence is GPSGSGKS. Asparagine 550 carries an N-linked (GlcNAc...) asparagine glycan. Transmembrane regions (helical) follow at residues 778-798 and 825-845; these read MLIGLVFSVLAGGGQPTQAVL and LMFFVVGIIQFITQSTNGAAF. The ABC transmembrane type-1 2 domain maps to 779–1068; that stretch reads LIGLVFSVLA…VFSFAPDMGK (290 aa). N-linked (GlcNAc...) asparagine glycosylation occurs at asparagine 877. 4 helical membrane-spanning segments follow: residues 892-912, 925-947, 1015-1035, and 1042-1062; these read HLSGVSGVTLGTILMTSTTLG, LALVCISVVPVLLACGFYRFYML, ALVFFCVALGFWYGGTLLGHH, and FFVCFSEILFGAQSAGTVFSF. A glycan (N-linked (GlcNAc...) asparagine) is linked at asparagine 1088. The region spanning 1103–1341 is the ABC transporter 2 domain; sequence IEFRNVHFRY…KGRYYELVNL (239 aa). 1138 to 1145 lines the ATP pocket; it reads GPSGCGKS.

Belongs to the ABC transporter superfamily. ABCB family. Multidrug resistance exporter (TC 3.A.1.201) subfamily.

The protein localises to the cell membrane. Its activity is regulated as follows. Fenamirol efflux transporter activity is inhibited by the cyclosporin derivative PSC 833, nigericin, reserpine and valinomycin. The effect of reserpine is transiant, while that of the cyclosporin derivative PSC 833, nigericin and valinomycin is proportional to the time of exposure. Cyclohexinmide has inhibitory effect only when applied prior to addition of the fungicide. Functionally, pleiotropic ABC efflux transporter involved in the protection of the cells against a wide range of toxic compounds. Confers resistance to the azole fenarimol via efflux transport. May also be involved in the secretion of penicillin. This is ABC multidrug transporter atrD from Emericella nidulans (Aspergillus nidulans).